The sequence spans 130 residues: Astrocytic phosphoprotein PEA-15 (130 aa).

A DED domain is found at 3–81 (EYGTLLQDLT…RPDLLTMVVD (79 aa)). Residues serine 61 and serine 90 each carry the phosphoserine modification. Positions 98–107 (KLTRIPSAKK) are microtubule-binding. The residue at position 104 (serine 104) is a Phosphoserine; by PKC. Serine 116 carries the post-translational modification Phosphoserine; by CaMK2. Residues 122–129 (KLAPPPKK) are microtubule-binding.

As to quaternary structure, binds RPS6KA3, MAPK3 and MAPK1. Interacts with CASP8 and FADD. Transient interaction with PLD1 and PLD2. Phosphorylated by protein kinase C and calcium-calmodulin-dependent protein kinase. These phosphorylation events are modulated by neurotransmitters or hormones. In terms of tissue distribution, predominantly expressed in the brain. Low levels in some peripheral organs.

It localises to the cytoplasm. In terms of biological role, blocks Ras-mediated inhibition of integrin activation and modulates the ERK MAP kinase cascade. Inhibits RPS6KA3 activities by retaining it in the cytoplasm. Inhibits both TNFRSF6- and TNFRSF1A-mediated CASP8 activity and apoptosis. Regulates glucose transport by controlling both the content of SLC2A1 glucose transporters on the plasma membrane and the insulin-dependent trafficking of SLC2A4 from the cell interior to the surface. This chain is Astrocytic phosphoprotein PEA-15 (Pea15), found in Mus musculus (Mouse).